A 755-amino-acid chain; its full sequence is SWI/SNF-related matrix-associated actin-dependent regulator of chromatin subfamily A-like protein 1 (755 aa).

Residues 7–27 (SEIAEKKRIALAKLQAKKSQL) are a coiled coil. Disordered stretches follow at residues 26–91 (QLLA…NKSS) and 104–134 (SNRE…SLSS). Residues 32–63 (PATNGKSTTSATGATQHANNGKSNPNQPQAKS) are compositionally biased toward polar residues. Phosphoserine is present on Ser63. One can recognise an HARP domain in the interval 139 to 217 (PVAVLLGNSI…KPYVHMNGIP (79 aa)). The region spanning 256 to 412 (CFAIAQKGRI…FTQLQMIDGK (157 aa)) is the Helicase ATP-binding domain. 269–276 (DEMGLGKT) is a binding site for ATP. The DESH box motif lies at 361–364 (DESH). Residues 527–681 (YLKTLVKEQK…NLQKATHTAA (155 aa)) enclose the Helicase C-terminal domain.

It belongs to the SNF2/RAD54 helicase family. SMARCAL1 subfamily.

It is found in the nucleus. Its function is as follows. ATP-dependent annealing helicase that catalyzes the rewinding of the stably unwound DNA. In Drosophila melanogaster (Fruit fly), this protein is SWI/SNF-related matrix-associated actin-dependent regulator of chromatin subfamily A-like protein 1 (Marcal1).